A 292-amino-acid chain; its full sequence is uncharacterized protein (292 aa).

Residues 66-86 (LFFYLLFWWTYLTIVVLLTVP) form a helical membrane-spanning segment.

Its subcellular location is the host membrane. This is an uncharacterized protein from Alcelaphine herpesvirus 1 (strain C500) (AlHV-1).